The primary structure comprises 72 residues: Large ribosomal subunit protein uL29 (72 aa).

It belongs to the universal ribosomal protein uL29 family.

In Chlamydia caviae (strain ATCC VR-813 / DSM 19441 / 03DC25 / GPIC) (Chlamydophila caviae), this protein is Large ribosomal subunit protein uL29.